The following is a 222-amino-acid chain: Endonuclease V (222 aa).

Positions 43 and 109 each coordinate Mg(2+).

This sequence belongs to the endonuclease V family. It depends on Mg(2+) as a cofactor.

It localises to the cytoplasm. It carries out the reaction Endonucleolytic cleavage at apurinic or apyrimidinic sites to products with a 5'-phosphate.. In terms of biological role, DNA repair enzyme involved in the repair of deaminated bases. Selectively cleaves double-stranded DNA at the second phosphodiester bond 3' to a deoxyinosine leaving behind the intact lesion on the nicked DNA. This Roseiflexus castenholzii (strain DSM 13941 / HLO8) protein is Endonuclease V.